The sequence spans 252 residues: Putative endonuclease C1F12.06c (252 aa).

The Mg(2+) site is built by aspartate 43 and aspartate 114.

This sequence belongs to the endonuclease V family.

It is found in the cytoplasm. The protein localises to the nucleus. The polypeptide is Putative endonuclease C1F12.06c (Schizosaccharomyces pombe (strain 972 / ATCC 24843) (Fission yeast)).